The following is a 573-amino-acid chain: Cytochrome P450 monooxygenase GME11363 (573 aa).

A helical transmembrane segment spans residues 10-30 (IGVVAAVLLAALILLYRAALP). Cysteine 519 serves as a coordination point for heme.

The protein belongs to the cytochrome P450 family. Heme serves as cofactor.

It localises to the membrane. Its pathway is secondary metabolite biosynthesis. Functionally, cytochrome P450 monooxygenase; part of the gene cluster that mediates the biosynthesis of dibenzodioxocinones such as pestalotiollide B, a novel class of inhibitors against cholesterol ester transfer protein (CEPT). The biosynthesis initiates from condensation of acetate and malonate units catalyzed by the non-reducing PKS pks8/GME11356. Pks8/GME11356 lacks a thioesterase (TE) domain, which is important to the cyclizing of the third ring of atrochrysone carboxylic acid, and the esterase GME11355 might play the role of TE and catalyzes the cyclization reaction of the C ring. The lactamase-like protein GME11357 (or other beta-lactamases in Pestalotiopsis microspora) probably hydrolyzes the thioester bond between the ACP of pks8/GME11356 and the intermediate to release atrochrysone carboxylic acid, which is spontaneously dehydrates to form endocrocin anthrone. Endocrocin anthrone is further converted to emodin via the endocrocin intermediate. Emodin is then oxidized by several enzymes such as the Baeyer-Villiger oxidase GME11358, the oxidoreductase GME11367, the short chain dehydrogenase/reductase GME11373, as well as by other oxidoreductases from the cluster, to modify the A and C rings and open the B ring, and finally yield monodictyphenone. The prenyltransferase GME11375 may catalyze the addition reaction between the C5 side chains and the carbon bone of dibenzodioxocinones. The remaining biochemical reactions to the final product dibenzodioxocinones should be methylation catalyzed by methyltransferase GME11366 and reduction and lactonization reaction catalyzed by a series of oxidordeuctases. This chain is Cytochrome P450 monooxygenase GME11363, found in Pestalotiopsis microspora.